Reading from the N-terminus, the 346-residue chain is Low-temperature-induced cysteine proteinase (346 aa).

A propeptide spans 1-17 (KLSKNKSDRYLPKVGDS) (activation peptide). 5 disulfides stabilise this stretch: C39–C81, C73–C114, C172–C223, C256–C268, and C262–C283. Residue C42 is part of the active site. Catalysis depends on residues H178 and N198. The N-linked (GlcNAc...) asparagine glycan is linked to N215. The propeptide at 238–346 (NPPKPAPSPP…FGNGGKKSSS (109 aa)) is removed in mature form.

This sequence belongs to the peptidase C1 family.

The sequence is that of Low-temperature-induced cysteine proteinase from Solanum lycopersicum (Tomato).